A 302-amino-acid polypeptide reads, in one-letter code: tRNA pseudouridine synthase B (302 aa).

His-40 lines the substrate pocket. Asp-45 serves as the catalytic Nucleophile. Substrate is bound by residues Tyr-73, Tyr-178, and Leu-199.

The protein belongs to the pseudouridine synthase TruB family. Type 1 subfamily.

It carries out the reaction uridine(55) in tRNA = pseudouridine(55) in tRNA. Functionally, responsible for synthesis of pseudouridine from uracil-55 in the psi GC loop of transfer RNAs. The polypeptide is tRNA pseudouridine synthase B (Buchnera aphidicola subsp. Baizongia pistaciae (strain Bp)).